A 196-amino-acid chain; its full sequence is ATP-dependent Clp protease proteolytic subunit (196 aa).

Catalysis depends on S101, which acts as the Nucleophile. The active site involves H126.

It belongs to the peptidase S14 family. Component of the chloroplastic Clp protease core complex.

The protein localises to the plastid. Its subcellular location is the chloroplast stroma. It carries out the reaction Hydrolysis of proteins to small peptides in the presence of ATP and magnesium. alpha-casein is the usual test substrate. In the absence of ATP, only oligopeptides shorter than five residues are hydrolyzed (such as succinyl-Leu-Tyr-|-NHMec, and Leu-Tyr-Leu-|-Tyr-Trp, in which cleavage of the -Tyr-|-Leu- and -Tyr-|-Trp bonds also occurs).. In terms of biological role, cleaves peptides in various proteins in a process that requires ATP hydrolysis. Has a chymotrypsin-like activity. Plays a major role in the degradation of misfolded proteins. The sequence is that of ATP-dependent Clp protease proteolytic subunit from Lepidium virginicum (Virginia pepperweed).